The following is a 258-amino-acid chain: Chymotrypsin-like elastase family member 1 (258 aa).

Residues 1-8 (MLVLYGHS) form the signal peptide. A propeptide spans 9 to 18 (TQDLPETNAR) (activation peptide). The 238-residue stretch at 19–256 (VVGGTEAGRN…YISWINNVIA (238 aa)) folds into the Peptidase S1 domain. Cys48 and Cys64 are joined by a disulfide. The active-site Charge relay system is the His63. Residues Asp77, Asn79, Gln82, and Glu87 each contribute to the Ca(2+) site. A glycan (N-linked (GlcNAc...) asparagine) is linked at Asn79. Residue Asp111 is the Charge relay system of the active site. 3 cysteine pairs are disulfide-bonded: Cys145–Cys212, Cys176–Cys192, and Cys202–Cys232. Residue Ser206 is the Charge relay system of the active site. The N-linked (GlcNAc...) asparagine glycan is linked to Asn233.

This sequence belongs to the peptidase S1 family. Elastase subfamily. It depends on Ca(2+) as a cofactor. Basal layers of epidermis (at protein level). Not expressed in the pancreas.

It localises to the secreted. It catalyses the reaction Hydrolysis of proteins, including elastin. Preferential cleavage: Ala-|-Xaa.. In terms of biological role, serine proteases that hydrolyze many proteins in addition to elastin. The chain is Chymotrypsin-like elastase family member 1 (CELA1) from Homo sapiens (Human).